The primary structure comprises 287 residues: Ribosomal RNA small subunit methyltransferase A (287 aa).

The S-adenosyl-L-methionine site is built by Asn28, Leu30, Gly55, Glu76, Asp101, and Asn125.

This sequence belongs to the class I-like SAM-binding methyltransferase superfamily. rRNA adenine N(6)-methyltransferase family. RsmA subfamily.

It localises to the cytoplasm. It catalyses the reaction adenosine(1518)/adenosine(1519) in 16S rRNA + 4 S-adenosyl-L-methionine = N(6)-dimethyladenosine(1518)/N(6)-dimethyladenosine(1519) in 16S rRNA + 4 S-adenosyl-L-homocysteine + 4 H(+). In terms of biological role, specifically dimethylates two adjacent adenosines (A1518 and A1519) in the loop of a conserved hairpin near the 3'-end of 16S rRNA in the 30S particle. May play a critical role in biogenesis of 30S subunits. This is Ribosomal RNA small subunit methyltransferase A from Alkaliphilus oremlandii (strain OhILAs) (Clostridium oremlandii (strain OhILAs)).